A 133-amino-acid chain; its full sequence is CDGSH iron-sulfur domain-containing protein 2 homolog (133 aa).

Residues 1-35 (MEPISHLVKSSLPNYLSSLPIPDSVGGWFKLSFKD) lie on the Lumenal side of the membrane. The helical transmembrane segment at 36 to 58 (WLALIPPTVVVAGIGYTAYLAYC) threads the bilayer. Residues 59-133 (PAAKAICSAK…DNVGPIVIKK (75 aa)) lie on the Cytoplasmic side of the membrane. Residues Cys100, Cys102, Cys111, and His115 each coordinate [2Fe-2S] cluster.

It belongs to the CISD protein family. CISD2 subfamily. The cofactor is [2Fe-2S] cluster.

It localises to the endoplasmic reticulum membrane. The protein is CDGSH iron-sulfur domain-containing protein 2 homolog of Drosophila yakuba (Fruit fly).